The sequence spans 67 residues: Large ribosomal subunit protein bL35 (67 aa).

The protein belongs to the bacterial ribosomal protein bL35 family.

The polypeptide is Large ribosomal subunit protein bL35 (Novosphingobium aromaticivorans (strain ATCC 700278 / DSM 12444 / CCUG 56034 / CIP 105152 / NBRC 16084 / F199)).